The primary structure comprises 206 residues: CBS domain-containing protein CBSX3, mitochondrial (206 aa).

The transit peptide at 1 to 39 (MQGVIRSFVSGGNVVKGSVLQHLRVINPAIQPSVFCSRS) directs the protein to the mitochondrion. CBS domains follow at residues 61 to 127 (MKSK…GRSS) and 136 to 194 (MTEE…HREE).

Its subcellular location is the mitochondrion. The polypeptide is CBS domain-containing protein CBSX3, mitochondrial (CBSX3) (Arabidopsis thaliana (Mouse-ear cress)).